We begin with the raw amino-acid sequence, 181 residues long: Protein GrpE (181 aa).

Over residues 1–13 (MENTQENPATQSA) the composition is skewed to polar residues. The tract at residues 1–39 (MENTQENPATQSAEDIGSEKQAAQGAAPAAEAADAALAE) is disordered. Residues 21–39 (QAAQGAAPAAEAADAALAE) show a composition bias toward low complexity.

This sequence belongs to the GrpE family. In terms of assembly, homodimer.

It localises to the cytoplasm. Functionally, participates actively in the response to hyperosmotic and heat shock by preventing the aggregation of stress-denatured proteins, in association with DnaK and GrpE. It is the nucleotide exchange factor for DnaK and may function as a thermosensor. Unfolded proteins bind initially to DnaJ; upon interaction with the DnaJ-bound protein, DnaK hydrolyzes its bound ATP, resulting in the formation of a stable complex. GrpE releases ADP from DnaK; ATP binding to DnaK triggers the release of the substrate protein, thus completing the reaction cycle. Several rounds of ATP-dependent interactions between DnaJ, DnaK and GrpE are required for fully efficient folding. The chain is Protein GrpE from Burkholderia lata (strain ATCC 17760 / DSM 23089 / LMG 22485 / NCIMB 9086 / R18194 / 383).